A 139-amino-acid polypeptide reads, in one-letter code: Large ribosomal subunit protein uL16 (139 aa).

Residues 1-13 (MLQPARRKYRKEQ) show a composition bias toward basic residues. The disordered stretch occupies residues 1-23 (MLQPARRKYRKEQKGRNTGISHS).

It belongs to the universal ribosomal protein uL16 family. Part of the 50S ribosomal subunit.

Its function is as follows. Binds 23S rRNA and is also seen to make contacts with the A and possibly P site tRNAs. The sequence is that of Large ribosomal subunit protein uL16 from Herminiimonas arsenicoxydans.